The chain runs to 257 residues: GTP cyclohydrolase FolE2 (257 aa).

This sequence belongs to the GTP cyclohydrolase IV family.

The catalysed reaction is GTP + H2O = 7,8-dihydroneopterin 3'-triphosphate + formate + H(+). Its pathway is cofactor biosynthesis; 7,8-dihydroneopterin triphosphate biosynthesis; 7,8-dihydroneopterin triphosphate from GTP: step 1/1. In terms of biological role, converts GTP to 7,8-dihydroneopterin triphosphate. This Syntrophobacter fumaroxidans (strain DSM 10017 / MPOB) protein is GTP cyclohydrolase FolE2.